A 750-amino-acid chain; its full sequence is Photosystem I P700 chlorophyll a apoprotein A1 (750 aa).

8 consecutive transmembrane segments (helical) span residues 72-95 (VFSA…FHGA), 158-181 (LYTT…FHYH), 197-221 (MNHH…HVSL), 293-311 (TVHH…GHMY), 348-371 (WHAQ…HHMY), 387-413 (LSLF…IFMV), 435-457 (AIIS…LYIH), and 532-550 (FLVH…LILL). Residues cysteine 574 and cysteine 583 each contribute to the [4Fe-4S] cluster site. A run of 2 helical transmembrane segments spans residues 590–611 (HVFL…HFSW) and 664–686 (LSAY…MFLF). Histidine 675 lines the chlorophyll a' pocket. Chlorophyll a contacts are provided by methionine 683 and tyrosine 691. Residue tryptophan 692 participates in phylloquinone binding. A helical transmembrane segment spans residues 724–744 (AVGVAHYLLGGIATTWAFFLA).

Belongs to the PsaA/PsaB family. The PsaA/B heterodimer binds the P700 chlorophyll special pair and subsequent electron acceptors. PSI consists of a core antenna complex that captures photons, and an electron transfer chain that converts photonic excitation into a charge separation. The eukaryotic PSI reaction center is composed of at least 11 subunits. It depends on P700 is a chlorophyll a/chlorophyll a' dimer, A0 is one or more chlorophyll a, A1 is one or both phylloquinones and FX is a shared 4Fe-4S iron-sulfur center. as a cofactor.

Its subcellular location is the plastid. The protein localises to the chloroplast thylakoid membrane. It catalyses the reaction reduced [plastocyanin] + hnu + oxidized [2Fe-2S]-[ferredoxin] = oxidized [plastocyanin] + reduced [2Fe-2S]-[ferredoxin]. Functionally, psaA and PsaB bind P700, the primary electron donor of photosystem I (PSI), as well as the electron acceptors A0, A1 and FX. PSI is a plastocyanin-ferredoxin oxidoreductase, converting photonic excitation into a charge separation, which transfers an electron from the donor P700 chlorophyll pair to the spectroscopically characterized acceptors A0, A1, FX, FA and FB in turn. Oxidized P700 is reduced on the lumenal side of the thylakoid membrane by plastocyanin. This chain is Photosystem I P700 chlorophyll a apoprotein A1, found in Mesostigma viride (Green alga).